The chain runs to 599 residues: Elongation factor 4 (599 aa).

In terms of domain architecture, tr-type G spans 5 to 187 (STIRNFAIIA…AIVHRLPAPV (183 aa)). GTP contacts are provided by residues 17–22 (DHGKST) and 134–137 (NKAD).

This sequence belongs to the TRAFAC class translation factor GTPase superfamily. Classic translation factor GTPase family. LepA subfamily.

It is found in the cell inner membrane. The catalysed reaction is GTP + H2O = GDP + phosphate + H(+). Its function is as follows. Required for accurate and efficient protein synthesis under certain stress conditions. May act as a fidelity factor of the translation reaction, by catalyzing a one-codon backward translocation of tRNAs on improperly translocated ribosomes. Back-translocation proceeds from a post-translocation (POST) complex to a pre-translocation (PRE) complex, thus giving elongation factor G a second chance to translocate the tRNAs correctly. Binds to ribosomes in a GTP-dependent manner. This is Elongation factor 4 from Anaplasma marginale (strain Florida).